Reading from the N-terminus, the 511-residue chain is Maturase K (511 aa).

This sequence belongs to the intron maturase 2 family. MatK subfamily.

The protein localises to the plastid. It is found in the chloroplast. Usually encoded in the trnK tRNA gene intron. Probably assists in splicing its own and other chloroplast group II introns. This Pistia stratiotes (Water lettuce) protein is Maturase K.